We begin with the raw amino-acid sequence, 114 residues long: Amphinase-4 (114 aa).

Catalysis depends on histidine 15, which acts as the Proton acceptor. 4 disulfide bridges follow: cysteine 26-cysteine 79, cysteine 41-cysteine 85, cysteine 59-cysteine 100, and cysteine 97-cysteine 114. A glycan (N-linked (GlcNAc...) asparagine) is linked at asparagine 27. 42–46 (KPVNT) contacts substrate. N-linked (GlcNAc...) asparagine glycans are attached at residues asparagine 67 and asparagine 91. Catalysis depends on histidine 107, which acts as the Proton donor.

The protein belongs to the pancreatic ribonuclease family. In terms of assembly, monomer. In terms of processing, there are at least five different forms arising from glycan heterogeneity.

It is found in the secreted. Endonuclease, hydrolyzes highly polymerized RNA, poly(U) and poly(C), and the dinucleotides CpA and UpA. Hydrolyzes rCA, rUA and rUG. Has cytotoxic activity against cultured human submaxillary gland carcinoma cells. This is Amphinase-4 from Lithobates pipiens (Northern leopard frog).